We begin with the raw amino-acid sequence, 353 residues long: Nicotinate-nucleotide--dimethylbenzimidazole phosphoribosyltransferase (353 aa).

The Proton acceptor role is filled by Glu-320.

This sequence belongs to the CobT family.

The catalysed reaction is 5,6-dimethylbenzimidazole + nicotinate beta-D-ribonucleotide = alpha-ribazole 5'-phosphate + nicotinate + H(+). It functions in the pathway nucleoside biosynthesis; alpha-ribazole biosynthesis; alpha-ribazole from 5,6-dimethylbenzimidazole: step 1/2. Its function is as follows. Catalyzes the synthesis of alpha-ribazole-5'-phosphate from nicotinate mononucleotide (NAMN) and 5,6-dimethylbenzimidazole (DMB). This chain is Nicotinate-nucleotide--dimethylbenzimidazole phosphoribosyltransferase, found in Pseudoalteromonas translucida (strain TAC 125).